The sequence spans 332 residues: Ornithine carbamoyltransferase, catabolic (332 aa).

Carbamoyl phosphate is bound by residues 60 to 63 (STRT), Gln-87, Arg-111, and 138 to 141 (HPTQ). Residues Asn-170, Asp-230, and 234–235 (SM) contribute to the L-ornithine site. Carbamoyl phosphate is bound by residues 271–272 (CL) and Arg-316.

The protein belongs to the aspartate/ornithine carbamoyltransferase superfamily. OTCase family.

It is found in the cytoplasm. It carries out the reaction carbamoyl phosphate + L-ornithine = L-citrulline + phosphate + H(+). It participates in amino-acid degradation; L-arginine degradation via ADI pathway; carbamoyl phosphate from L-arginine: step 2/2. In terms of biological role, reversibly catalyzes the transfer of the carbamoyl group from carbamoyl phosphate (CP) to the N(epsilon) atom of ornithine (ORN) to produce L-citrulline. The chain is Ornithine carbamoyltransferase, catabolic from Bacillus cereus (strain ATCC 10987 / NRS 248).